A 703-amino-acid polypeptide reads, in one-letter code: Fibulin-1 (703 aa).

The signal sequence occupies residues 1-29; the sequence is MERAAPSRRVPLPLLLLGGLALLAAGVDA. 35 disulfide bridges follow: Cys-36–Cys-61, Cys-37–Cys-68, Cys-50–Cys-69, Cys-78–Cys-109, Cys-91–Cys-110, Cys-112–Cys-136, Cys-113–Cys-143, Cys-126–Cys-144, Cys-180–Cys-190, Cys-186–Cys-199, Cys-201–Cys-214, Cys-220–Cys-233, Cys-227–Cys-242, Cys-248–Cys-260, Cys-266–Cys-279, Cys-273–Cys-288, Cys-294–Cys-306, Cys-312–Cys-325, Cys-319–Cys-334, Cys-341–Cys-354, Cys-360–Cys-373, Cys-367–Cys-382, Cys-384–Cys-397, Cys-403–Cys-415, Cys-411–Cys-424, Cys-426–Cys-439, Cys-445–Cys-454, Cys-450–Cys-463, Cys-465–Cys-479, Cys-485–Cys-498, Cys-494–Cys-507, Cys-509–Cys-523, Cys-529–Cys-542, Cys-536–Cys-551, and Cys-556–Cys-577. Anaphylatoxin-like domains are found at residues 36–76, 77–111, and 112–144; these read CCAD…LEEL, HCAT…RCCH, and CCLL…QACC. N-linked (GlcNAc...) (complex) asparagine glycosylation occurs at Asn-98. The EGF-like 1 domain maps to 176 to 215; it reads LNDRCRGGGPCKQQCRDTGDEVVCSCFVGYQLLSDGVSCE. Residues 216–261 form the EGF-like 2; calcium-binding domain; the sequence is DVNECITGSHSCRLGESCINTVGSFRCQRDSSCGTGYELTEDNSCK. Positions 262–307 constitute an EGF-like 3; calcium-binding domain; the sequence is DIDECESGIHNCLPDFICQNTLGSFRCRPKLQCKSGFIQDALGNCI. The EGF-like 4; calcium-binding domain occupies 308–355; sequence DINECLSISAPCPIGHTCINTEGSYTCQKNVPNCGRGYHLNEEGTRCV. An EGF-like 5; calcium-binding domain is found at 356-398; sequence DVDECAPPAEPCGKGHRCVNSPGSFRCECKTGYYFDGISRMCV. Residues 356-440 are self-association and FN1-binding; calcium is necessary for homotypic binding, but not for heterotypic binding; the sequence is DVDECAPPAE…RLSVDGRSCE (85 aa). Residues 399-440 form the EGF-like 6; calcium-binding domain; the sequence is DVNECQRYPGRLCGHKCENTLGSYLCSCSVGFRLSVDGRSCE. Positions 441–480 constitute an EGF-like 7; calcium-binding domain; sequence DINECSSSPCSQECANVYGSYQCYCRRGYQLSDVDGVTCE. Positions 481-524 constitute an EGF-like 8; calcium-binding domain; it reads DIDECALPTGGHICSYRCINIPGSFQCSCPSSGYRLAPNGRNCQ. The EGF-like 9; calcium-binding domain occupies 525–578; sequence DIDECVTGIHNCSINETCFNIQGGFRCLAFECPENYRRSAATLQQEKTDTVRCI. Residues Asn-535 and Asn-539 are each glycosylated (N-linked (GlcNAc...) asparagine).

The protein belongs to the fibulin family. In terms of assembly, homomultimerizes and interacts with various extracellular matrix components such as FN1, LAMA1, LAMA2, NID, ACAN, CSPG2 and type IV collagen. Also interacts with APP and FGB. Interacts with FBLN7. Interacts with CCN3. As to quaternary structure, (Microbial infection) Interacts with human papillomavirus/HPV type 16, 18 and 31 proteins E6. Isoform A and isoform B are only expressed in placenta. Isoform C and isoform D are expressed in a variety of tissues and cultured cells.

It localises to the secreted. Its subcellular location is the extracellular space. The protein resides in the extracellular matrix. In terms of biological role, incorporated into fibronectin-containing matrix fibers. May play a role in cell adhesion and migration along protein fibers within the extracellular matrix (ECM). Could be important for certain developmental processes and contribute to the supramolecular organization of ECM architecture, in particular to those of basement membranes. Has been implicated in a role in cellular transformation and tumor invasion, it appears to be a tumor suppressor. May play a role in haemostasis and thrombosis owing to its ability to bind fibrinogen and incorporate into clots. Could play a significant role in modulating the neurotrophic activities of APP, particularly soluble APP. The sequence is that of Fibulin-1 (FBLN1) from Homo sapiens (Human).